A 97-amino-acid chain; its full sequence is Defensin-like protein 246 (97 aa).

Positions 1-24 are cleaved as a signal peptide; it reads MKFVAIFLVTCVLFSLFPSHLSQG. Disulfide bonds link Cys-39/Cys-96, Cys-50/Cys-79, Cys-58/Cys-89, and Cys-77/Cys-91.

Belongs to the DEFL family. Flower buds and stems.

It is found in the secreted. This is Defensin-like protein 246 (SCRL5) from Arabidopsis thaliana (Mouse-ear cress).